The sequence spans 67 residues: MAAQEQQQPQSRETETEVDVPEAPPAAPEAQASEATQGVDDLLDEIDGVLESNAEEFVRAFVQKGGQ.

The segment covering 1–11 (MAAQEQQQPQS) has biased composition (polar residues). Residues 1 to 38 (MAAQEQQQPQSRETETEVDVPEAPPAAPEAQASEATQG) are disordered. The segment at 25-61 (PAAPEAQASEATQGVDDLLDEIDGVLESNAEEFVRAF) is ARC ATPase binding. A compositionally biased stretch (low complexity) spans 28–37 (PEAQASEATQ). A coiled-coil region spans residues 29–49 (EAQASEATQGVDDLLDEIDGV). Q67 carries the post-translational modification Deamidated glutamine. Residue Q67 forms an Isoglutamyl lysine isopeptide (Gln-Lys) (interchain with K-? in acceptor proteins) linkage.

Belongs to the prokaryotic ubiquitin-like protein family. Strongly interacts with the proteasome-associated ATPase ARC through a hydrophobic interface; the interacting region of Pup lies in its C-terminal half. There is one Pup binding site per ARC hexamer ring. Is modified by deamidation of its C-terminal glutamine to glutamate by the deamidase Dop, a prerequisite to the subsequent pupylation process.

The protein operates within protein degradation; proteasomal Pup-dependent pathway. In terms of biological role, protein modifier that is covalently attached to lysine residues of substrate proteins, thereby targeting them for proteasomal degradation. The tagging system is termed pupylation. The polypeptide is Prokaryotic ubiquitin-like protein Pup (pup) (Paenarthrobacter aurescens (strain TC1)).